A 292-amino-acid chain; its full sequence is Probable septum site-determining protein MinC (292 aa).

The tract at residues 109 to 188 (QVIDTAPPND…PQSSSALVIT (80 aa)) is disordered. Residues 140–150 (QDDEADGEQAD) show a composition bias toward acidic residues. A compositionally biased stretch (polar residues) spans 171–185 (ANRPTATPPQSSSAL).

It belongs to the MinC family. Interacts with MinD and FtsZ.

Cell division inhibitor that blocks the formation of polar Z ring septums. Rapidly oscillates between the poles of the cell to destabilize FtsZ filaments that have formed before they mature into polar Z rings. Prevents FtsZ polymerization. This chain is Probable septum site-determining protein MinC, found in Bordetella pertussis (strain Tohama I / ATCC BAA-589 / NCTC 13251).